The following is a 227-amino-acid chain: Small heat shock protein hspG3 (227 aa).

Residues 31 to 227 (NKRVDIIPSM…SSNTIKININ (197 aa)) enclose the sHSP domain. Positions 119–164 (QQQQLENSNKENDEPSIEEFEEDVKSKSELNKTTLNTTENKDEDKT) are disordered.

Belongs to the small heat shock protein (HSP20) family.

The polypeptide is Small heat shock protein hspG3 (hspG3) (Dictyostelium discoideum (Social amoeba)).